Here is a 31-residue protein sequence, read N- to C-terminus: Cyclotide mech-5 (31 aa).

A cross-link (cyclopeptide (Gly-Asp)) is located at residues 1–31; it reads GVIPCGESCVFIPCISSVVGCTCKNKVCYRD. Intrachain disulfides connect Cys-5-Cys-21, Cys-9-Cys-23, and Cys-14-Cys-28.

This is a cyclic peptide. In terms of processing, contains 3 disulfide bonds.

Its function is as follows. Probably participates in a plant defense mechanism (Potential). Binds to and induces leakage in phospholipd membranes, particularly ones containing 1-palmitoyl-2-oleophosphatidylethanolamine (POPE). This chain is Cyclotide mech-5, found in Melicytus chathamicus (Chatham Island mahoe).